The primary structure comprises 812 residues: Eukaryotic translation initiation factor 3 subunit C (812 aa).

The interval 1–110 is disordered; it reads MSRFFSSNYE…EESDEEDGKK (110 aa). Composition is skewed to acidic residues over residues 18–30 and 38–64; these read SEED…EEDL and SELD…DSDD. A phosphoserine mark is found at serine 98, serine 99, and serine 103. The PCI domain maps to 608–783; it reads YHQHINLDLI…TIFVVEKGDE (176 aa).

It belongs to the eIF-3 subunit C family. In terms of assembly, the eukaryotic translation initiation factor 3 (eIF-3) core complex is composed of TIF32, PRT1, NIP1, TIF34 and TIF35. A subcomplex of TIF32, NIP1 and PRT1 mediates the interaction with eIF-1, TIF5/eIF-5 and HCR1. The factors eIF-1, eIF-2, eIF-3, TIF5/eIF-5 and methionyl-tRNAi form a multifactor complex (MFC) that may bind to the 40S ribosome. TIF32, NIP1 and TIF5/eIF-5 comprise a minimal 40S-ribosome-binding unit. NIP1 interacts with TIF5/eIF-5 and SUI1.

It is found in the cytoplasm. Component of the eukaryotic translation initiation factor 3 (eIF-3) complex, which is involved in protein synthesis of a specialized repertoire of mRNAs and, together with other initiation factors, stimulates binding of mRNA and methionyl-tRNAi to the 40S ribosome. The eIF-3 complex specifically targets and initiates translation of a subset of mRNAs involved in cell proliferation. The sequence is that of Eukaryotic translation initiation factor 3 subunit C from Saccharomyces cerevisiae (strain ATCC 204508 / S288c) (Baker's yeast).